We begin with the raw amino-acid sequence, 183 residues long: Potassium-transporting ATPase KdpC subunit (183 aa).

A helical membrane pass occupies residues 10-30; the sequence is ASLLVLSLVTGVAYPLLVTGI.

The protein belongs to the KdpC family. As to quaternary structure, the system is composed of three essential subunits: KdpA, KdpB and KdpC.

The protein localises to the cell inner membrane. Functionally, part of the high-affinity ATP-driven potassium transport (or Kdp) system, which catalyzes the hydrolysis of ATP coupled with the electrogenic transport of potassium into the cytoplasm. This subunit acts as a catalytic chaperone that increases the ATP-binding affinity of the ATP-hydrolyzing subunit KdpB by the formation of a transient KdpB/KdpC/ATP ternary complex. The chain is Potassium-transporting ATPase KdpC subunit from Pseudomonas aeruginosa (strain UCBPP-PA14).